The primary structure comprises 310 residues: Homoserine kinase (310 aa).

91–101 (PIGSGLGSSAC) provides a ligand contact to ATP.

Belongs to the GHMP kinase family. Homoserine kinase subfamily.

The protein localises to the cytoplasm. It carries out the reaction L-homoserine + ATP = O-phospho-L-homoserine + ADP + H(+). Its pathway is amino-acid biosynthesis; L-threonine biosynthesis; L-threonine from L-aspartate: step 4/5. Catalyzes the ATP-dependent phosphorylation of L-homoserine to L-homoserine phosphate. This Escherichia coli O157:H7 protein is Homoserine kinase.